Consider the following 319-residue polypeptide: MRLLPRLLLLFLLAFPAAVLLRGGPGGSLAVAQDLTEDEETVEDPIIEDEDDEAEVEEDEPTDLAEEKEEEEDVSSEPEASPSADTTILFVKGEDFPANNIVKFLVGFTNKGTEDFIVESLDASFRYPQDYQFYIQNFTALPLNTIVPPQRQATFEYSFIPAEPMGGRPFGLVINLNYKDLNGNVFQDAVFNQTVTVIEREDGLDGETIFMYMFLAGLGLLVVVGLHQLLESRKRKRPIQKVEMGTSSQNDVDMSWIPQETLNQISAGRERHTEVTLQLHRPVVSDASYACFSCFRKLPRPATLAAWTSSLRQLAVCGI.

Residues 1–21 form the signal peptide; that stretch reads MRLLPRLLLLFLLAFPAAVLL. Topologically, residues 22–208 are lumenal; it reads RGGPGGSLAV…EREDGLDGET (187 aa). Acidic residues predominate over residues 35–76; that stretch reads LTEDEETVEDPIIEDEDDEAEVEEDEPTDLAEEKEEEEDVSS. The interval 35–84 is disordered; it reads LTEDEETVEDPIIEDEDDEAEVEEDEPTDLAEEKEEEEDVSSEPEASPSA. Residues N137 and N192 are each glycosylated (N-linked (GlcNAc...) asparagine). A helical membrane pass occupies residues 209 to 229; the sequence is IFMYMFLAGLGLLVVVGLHQL. Topologically, residues 230–319 are cytoplasmic; the sequence is LESRKRKRPI…SLRQLAVCGI (90 aa). Residue S248 is modified to Phosphoserine. Residue T261 is modified to Phosphothreonine.

Belongs to the TRAP-alpha family. As to quaternary structure, heterotetramer of TRAP-alpha, TRAP-beta, TRAP-delta and TRAP-gamma. Interacts with palmitoylated calnexin (CALX), the interaction is required for efficient folding of glycosylated proteins.

The protein localises to the endoplasmic reticulum membrane. In terms of biological role, TRAP proteins are part of a complex whose function is to bind calcium to the ER membrane and thereby regulate the retention of ER resident proteins. May be involved in the recycling of the translocation apparatus after completion of the translocation process or may function as a membrane-bound chaperone facilitating folding of translocated proteins. The chain is Translocon-associated protein subunit alpha (Ssr1) from Rattus norvegicus (Rat).